A 197-amino-acid chain; its full sequence is Recombination protein RecR (197 aa).

The segment at 55-70 adopts a C4-type zinc-finger fold; sequence CVQCRDFTESEVCAIC. Residues 78–173 form the Toprim domain; that stretch reads QQLCVVESPA…RPSRLAQGMP (96 aa).

The protein belongs to the RecR family.

Its function is as follows. May play a role in DNA repair. It seems to be involved in an RecBC-independent recombinational process of DNA repair. It may act with RecF and RecO. This chain is Recombination protein RecR, found in Xanthomonas campestris pv. campestris (strain 8004).